The following is a 570-amino-acid chain: Sulfite reductase [NADPH] hemoprotein beta-component (570 aa).

Residues C434, C440, C479, and C483 each coordinate [4Fe-4S] cluster. C483 is a siroheme binding site.

It belongs to the nitrite and sulfite reductase 4Fe-4S domain family. In terms of assembly, alpha(8)-beta(8). The alpha component is a flavoprotein, the beta component is a hemoprotein. Siroheme serves as cofactor. Requires [4Fe-4S] cluster as cofactor.

The enzyme catalyses hydrogen sulfide + 3 NADP(+) + 3 H2O = sulfite + 3 NADPH + 4 H(+). The protein operates within sulfur metabolism; hydrogen sulfide biosynthesis; hydrogen sulfide from sulfite (NADPH route): step 1/1. Component of the sulfite reductase complex that catalyzes the 6-electron reduction of sulfite to sulfide. This is one of several activities required for the biosynthesis of L-cysteine from sulfate. This chain is Sulfite reductase [NADPH] hemoprotein beta-component, found in Salmonella paratyphi A (strain ATCC 9150 / SARB42).